A 331-amino-acid chain; its full sequence is 4-hydroxythreonine-4-phosphate dehydrogenase (331 aa).

Positions 137 and 138 each coordinate substrate. A divalent metal cation is bound by residues His167, His212, and His267. 3 residues coordinate substrate: Lys275, Asn284, and Arg293.

Belongs to the PdxA family. As to quaternary structure, homodimer. Requires Zn(2+) as cofactor. The cofactor is Mg(2+). Co(2+) is required as a cofactor.

Its subcellular location is the cytoplasm. It catalyses the reaction 4-(phosphooxy)-L-threonine + NAD(+) = 3-amino-2-oxopropyl phosphate + CO2 + NADH. The protein operates within cofactor biosynthesis; pyridoxine 5'-phosphate biosynthesis; pyridoxine 5'-phosphate from D-erythrose 4-phosphate: step 4/5. Functionally, catalyzes the NAD(P)-dependent oxidation of 4-(phosphooxy)-L-threonine (HTP) into 2-amino-3-oxo-4-(phosphooxy)butyric acid which spontaneously decarboxylates to form 3-amino-2-oxopropyl phosphate (AHAP). The protein is 4-hydroxythreonine-4-phosphate dehydrogenase of Yersinia enterocolitica serotype O:8 / biotype 1B (strain NCTC 13174 / 8081).